Reading from the N-terminus, the 417-residue chain is Gamma-glutamyl phosphate reductase (417 aa).

The protein belongs to the gamma-glutamyl phosphate reductase family.

The protein localises to the cytoplasm. The enzyme catalyses L-glutamate 5-semialdehyde + phosphate + NADP(+) = L-glutamyl 5-phosphate + NADPH + H(+). The protein operates within amino-acid biosynthesis; L-proline biosynthesis; L-glutamate 5-semialdehyde from L-glutamate: step 2/2. Catalyzes the NADPH-dependent reduction of L-glutamate 5-phosphate into L-glutamate 5-semialdehyde and phosphate. The product spontaneously undergoes cyclization to form 1-pyrroline-5-carboxylate. The sequence is that of Gamma-glutamyl phosphate reductase from Escherichia fergusonii (strain ATCC 35469 / DSM 13698 / CCUG 18766 / IAM 14443 / JCM 21226 / LMG 7866 / NBRC 102419 / NCTC 12128 / CDC 0568-73).